Reading from the N-terminus, the 292-residue chain is Elongation factor Ts (292 aa).

Residues 80–83 (TDFV) form an involved in Mg(2+) ion dislocation from EF-Tu region.

It belongs to the EF-Ts family.

The protein localises to the cytoplasm. Functionally, associates with the EF-Tu.GDP complex and induces the exchange of GDP to GTP. It remains bound to the aminoacyl-tRNA.EF-Tu.GTP complex up to the GTP hydrolysis stage on the ribosome. This Cupriavidus pinatubonensis (strain JMP 134 / LMG 1197) (Cupriavidus necator (strain JMP 134)) protein is Elongation factor Ts.